The primary structure comprises 161 residues: MLLLLLGILFLHIAVLVLLFVSTIVSQWLVGNGHTTDLWQNCTTSALGAVQHCYSSSVSEWLQSVQATMILSVIFSVLALFLFFCQLFTLTKGGRFYITGFFQILAGLCVMSAAAIYTVRHSEWHVNTDYSYGFAYILAWVAFPLALLSGIIYVILRKREL.

Met1 is a topological domain (cytoplasmic). Residues 2-31 (LLLLLGILFLHIAVLVLLFVSTIVSQWLVG) traverse the membrane as a helical segment. Residues 32–64 (NGHTTDLWQNCTTSALGAVQHCYSSSVSEWLQS) are Extracellular-facing. N-linked (GlcNAc...) asparagine glycosylation is present at Asn41. Residues 65–91 (VQATMILSVIFSVLALFLFFCQLFTLT) traverse the membrane as a helical segment. The Cytoplasmic segment spans residues 92–95 (KGGR). A helical transmembrane segment spans residues 96–119 (FYITGFFQILAGLCVMSAAAIYTV). Residues 120–133 (RHSEWHVNTDYSYG) lie on the Extracellular side of the membrane. The helical transmembrane segment at 134–156 (FAYILAWVAFPLALLSGIIYVIL) threads the bilayer. At 157–160 (RKRE) the chain is on the cytoplasmic side.

The protein belongs to the PMP-22/EMP/MP20 family. Post-translationally, ubiquitinated by the DCX(DCAF13) E3 ubiquitin ligase complex, leading to its degradation. Schwann cells of the peripheral nervous system. Expressed at growth arrest of mammalian fibroblasts.

It localises to the cell membrane. Its function is as follows. Might be involved in growth regulation, and in myelinization in the peripheral nervous system. This Mus musculus (Mouse) protein is Peripheral myelin protein 22 (Pmp22).